The sequence spans 354 residues: Protein Wnt-8a (354 aa).

Positions 1 to 19 are cleaved as a signal peptide; that stretch reads MGHLLMLWVAAGMCYPALG. A disulfide bridge connects residues Cys54 and Cys65. An N-linked (GlcNAc...) asparagine glycan is attached at Asn103. 10 disulfide bridges follow: Cys104/Cys112, Cys114/Cys132, Cys180/Cys194, Cys182/Cys189, Cys259/Cys297, Cys275/Cys290, Cys294/Cys336, Cys312/Cys327, Cys314/Cys324, and Cys319/Cys320. A lipid anchor (O-palmitoleoyl serine) is attached at Ser186. Residue Asn262 is glycosylated (N-linked (GlcNAc...) asparagine).

Belongs to the Wnt family. Forms a soluble 1:1 complex with AFM; this prevents oligomerization and is required for prolonged biological activity. The complex with AFM may represent the physiological form in body fluids. In terms of processing, palmitoleoylation is required for efficient binding to frizzled receptors. Depalmitoleoylation leads to Wnt signaling pathway inhibition. Post-translationally, proteolytic processing by TIKI1 and TIKI2 promotes oxidation and formation of large disulfide-bond oligomers, leading to inactivation of WNT8A.

The protein localises to the secreted. It is found in the extracellular space. It localises to the extracellular matrix. Functionally, ligand for members of the frizzled family of seven transmembrane receptors. Plays a role in embryonic patterning. The sequence is that of Protein Wnt-8a (Wnt8a) from Mus musculus (Mouse).